The following is an 88-amino-acid chain: Protein A19 homolog (88 aa).

The segment at 1–28 (MADSTAGAKKRKKRSTSATSTRKEPPTV) is disordered.

It belongs to the chordopoxvirinae A19 family.

The sequence is that of Protein A19 homolog from Fowlpox virus (strain NVSL) (FPV).